Consider the following 361-residue polypeptide: Chorismate synthase (361 aa).

NADP(+) contacts are provided by arginine 48 and arginine 54. Residues 125–127, 238–239, glycine 278, 293–297, and arginine 319 contribute to the FMN site; these read RSS, NA, and KPTSS.

Belongs to the chorismate synthase family. Homotetramer. The cofactor is FMNH2.

It catalyses the reaction 5-O-(1-carboxyvinyl)-3-phosphoshikimate = chorismate + phosphate. It functions in the pathway metabolic intermediate biosynthesis; chorismate biosynthesis; chorismate from D-erythrose 4-phosphate and phosphoenolpyruvate: step 7/7. In terms of biological role, catalyzes the anti-1,4-elimination of the C-3 phosphate and the C-6 proR hydrogen from 5-enolpyruvylshikimate-3-phosphate (EPSP) to yield chorismate, which is the branch point compound that serves as the starting substrate for the three terminal pathways of aromatic amino acid biosynthesis. This reaction introduces a second double bond into the aromatic ring system. The protein is Chorismate synthase of Pectobacterium carotovorum subsp. carotovorum (strain PC1).